The sequence spans 303 residues: Probable cell division protein WhiA (303 aa).

Positions 272–303 form a DNA-binding region, H-T-H motif; the sequence is SLQQIADSLDFAITKSGVNHRLRKINKLAEDL.

This sequence belongs to the WhiA family.

Functionally, involved in cell division and chromosome segregation. This Streptococcus equi subsp. zooepidemicus (strain MGCS10565) protein is Probable cell division protein WhiA.